The chain runs to 140 residues: Phosphopantetheine adenylyltransferase (140 aa).

S9 contacts substrate. ATP-binding positions include 9–10 and H17; that span reads SF. Substrate contacts are provided by K41, T74, and R88. Residues 89–91, E99, and 124–130 contribute to the ATP site; these read GLR and KRSLSST.

It belongs to the bacterial CoaD family. Homohexamer. It depends on Mg(2+) as a cofactor.

The protein resides in the cytoplasm. It carries out the reaction (R)-4'-phosphopantetheine + ATP + H(+) = 3'-dephospho-CoA + diphosphate. Its pathway is cofactor biosynthesis; coenzyme A biosynthesis; CoA from (R)-pantothenate: step 4/5. Functionally, reversibly transfers an adenylyl group from ATP to 4'-phosphopantetheine, yielding dephospho-CoA (dPCoA) and pyrophosphate. In Mycoplasma mycoides subsp. mycoides SC (strain CCUG 32753 / NCTC 10114 / PG1), this protein is Phosphopantetheine adenylyltransferase.